Here is an 87-residue protein sequence, read N- to C-terminus: U3-theraphotoxin-Hhn1a 13 (87 aa).

The signal sequence occupies residues methionine 1–alanine 24. Positions serine 25–arginine 52 are excised as a propeptide. 3 cysteine pairs are disulfide-bonded: cysteine 54–cysteine 67, cysteine 61–cysteine 72, and cysteine 66–cysteine 79.

This sequence belongs to the neurotoxin 10 (Hwtx-1) family. 51 (Hntx-8) subfamily. Hntx-8 sub-subfamily. In terms of tissue distribution, expressed by the venom gland.

The protein localises to the secreted. Ion channel inhibitor. This Cyriopagopus hainanus (Chinese bird spider) protein is U3-theraphotoxin-Hhn1a 13.